Consider the following 100-residue polypeptide: uncharacterized protein (100 aa).

Positions 1–18 are cleaved as a signal peptide; the sequence is MWGFLVLKARWLVTPVRT. Residues 48–86 are disordered; that stretch reads LTRGVIRVSPQERSQQNQSAPKGPTPSTRPKPRTLGPQA. Positions 58–69 are enriched in polar residues; that stretch reads QERSQQNQSAPK. The N-linked (GlcNAc...) asparagine glycan is linked to Asn64.

It localises to the secreted. This is an uncharacterized protein from Homo sapiens (Human).